Here is a 525-residue protein sequence, read N- to C-terminus: GMP synthase [glutamine-hydrolyzing] (525 aa).

A Glutamine amidotransferase type-1 domain is found at 9 to 207 (RILILDFGSQ…VLTISGCEAL (199 aa)). Cysteine 86 (nucleophile) is an active-site residue. Residues histidine 181 and glutamate 183 contribute to the active site. The GMPS ATP-PPase domain occupies 208–400 (WTPAKIVDDA…LGLPYDMVYR (193 aa)). 235–241 (SGGVDSS) is an ATP binding site.

Homodimer.

It catalyses the reaction XMP + L-glutamine + ATP + H2O = GMP + L-glutamate + AMP + diphosphate + 2 H(+). It participates in purine metabolism; GMP biosynthesis; GMP from XMP (L-Gln route): step 1/1. Its function is as follows. Catalyzes the synthesis of GMP from XMP. This Marinobacter nauticus (strain ATCC 700491 / DSM 11845 / VT8) (Marinobacter aquaeolei) protein is GMP synthase [glutamine-hydrolyzing].